The following is a 380-amino-acid chain: Probable peptidoglycan glycosyltransferase FtsW (380 aa).

Helical transmembrane passes span 14 to 34 (LLWC…SSSI), 52 to 72 (ILYL…PISF), 79 to 99 (IILL…NSIH), 112 to 131 (MQPS…NYLS), 141 to 161 (FGGF…LLVE), 162 to 182 (PDLG…FISG), 188 to 208 (FIPT…KSPY), 268 to 288 (IIGE…IFFI), 304 to 324 (IFFS…QTLI), and 341 to 361 (PLIS…IILI).

It belongs to the SEDS family. FtsW subfamily.

The protein localises to the cell membrane. It catalyses the reaction [GlcNAc-(1-&gt;4)-Mur2Ac(oyl-L-Ala-gamma-D-Glu-L-Lys-D-Ala-D-Ala)](n)-di-trans,octa-cis-undecaprenyl diphosphate + beta-D-GlcNAc-(1-&gt;4)-Mur2Ac(oyl-L-Ala-gamma-D-Glu-L-Lys-D-Ala-D-Ala)-di-trans,octa-cis-undecaprenyl diphosphate = [GlcNAc-(1-&gt;4)-Mur2Ac(oyl-L-Ala-gamma-D-Glu-L-Lys-D-Ala-D-Ala)](n+1)-di-trans,octa-cis-undecaprenyl diphosphate + di-trans,octa-cis-undecaprenyl diphosphate + H(+). It participates in cell wall biogenesis; peptidoglycan biosynthesis. Functionally, peptidoglycan polymerase that is essential for cell division. The protein is Probable peptidoglycan glycosyltransferase FtsW of Buchnera aphidicola subsp. Baizongia pistaciae (strain Bp).